The chain runs to 788 residues: Leucine-rich repeat and fibronectin type-III domain-containing protein 2 (788 aa).

The N-terminal stretch at 1 to 20 is a signal peptide; the sequence is METLLGGLLAFGMAFAVVDA. The region spanning 21 to 52 is the LRRNT domain; the sequence is CPKYCVCQNLSESLGTLCPSKGLLFVPPDIDR. Topologically, residues 21 to 534 are extracellular; that stretch reads CPKYCVCQNL…MHSQILGGTM (514 aa). A glycan (N-linked (GlcNAc...) asparagine) is linked at Asn-29. 7 LRR repeats span residues 53–74, 77–98, 101–122, 125–146, 150–171, 174–195, and 198–219; these read RTVELRLGGNFIIHIGRQDFAN, GLVDLTLSRNTISHIQPFSFLD, SLRSLHLDSNRLPSLGEDTLRG, NLQHLIVNNNQLGGIADDAFED, TLEDLDLSYNNLHGLPWDSVRR, NLHQLSLDHNLLDHIAEGTFAD, and KLARLDLTSNRLQKLPPDPIFA. Positions 242 to 288 constitute an LRRCT domain; it reads NPLHCNCELLWLRRLERDDDLETCGSPGSLKGRYFWHIREEEFVCEP. In terms of domain architecture, Ig-like spans 289–375; it reads PLITQHTHKL…GEATATVEVS (87 aa). Residues Cys-310 and Cys-359 are joined by a disulfide bond. N-linked (GlcNAc...) asparagine glycans are attached at residues Asn-332, Asn-341, and Asn-384. The tract at residues 383-423 is disordered; that stretch reads SNSTSRMAPPKSRLSDITGSSKTSRGGGGSGAGEPPKSTPE. One can recognise a Fibronectin type-III domain in the interval 422–518; the sequence is PERAVLVSDV…GCAQFFTKAD (97 aa). A helical membrane pass occupies residues 535–555; that stretch reads ILVIGGIIVATLLVFIVILMV. Over 556-788 the chain is Cytoplasmic; sequence RYKVCNHDTP…SSEWVMESTV (233 aa). Residues 620 to 631 are compositionally biased toward low complexity; sequence CDSSSSSSLGSG. 2 disordered regions span residues 620–655 and 668–711; these read CDSSSSSSLGSGEAAGLGRGPWRLPPPAPRPKPSLD and SQRK…RSLL. The segment covering 642–651 has biased composition (pro residues); that stretch reads RLPPPAPRPK. A PDZ-binding motif is present at residues 785 to 788; that stretch reads ESTV.

Belongs to the LRFN family. In terms of assembly, forms heteromeric complexes with LRFN1, LRFN3, LRFN4 and LRFN5. Can form homomeric complexes, but not across cell junctions. Interacts with DLG4. Directly interacts with DLG1, DLG2 and DLG3. Directly interacts with 2 NMDA receptor subunits GRIN1 and GRIN2A. In terms of processing, glycosylated. Predominantly expressed in the brain, with a weak, but broad expression in the cerebral cortex and diencephalic nuclei. Strongly expressed in both the pyramidal layer and the dentate gyrus of the hippocampus. Also detected in other parts of the central nervous system, including the olfactory bulb, pons, cerebellum, and medulla oblongata, as well as in the peripheral nervous system, such as the ganglia of cranial nerves and the dorsal root ganglion during gestation.

The protein resides in the membrane. The protein localises to the synapse. It localises to the postsynaptic cell membrane. In terms of biological role, promotes neurite outgrowth in hippocampal neurons. Enhances the cell surface expression of 2 NMDA receptor subunits GRIN1 and GRIN2A. May play a role in redistributing DLG4 to the cell periphery. This Mus musculus (Mouse) protein is Leucine-rich repeat and fibronectin type-III domain-containing protein 2 (Lrfn2).